A 115-amino-acid chain; its full sequence is Large ribosomal subunit protein bL20 (115 aa).

This sequence belongs to the bacterial ribosomal protein bL20 family.

In terms of biological role, binds directly to 23S ribosomal RNA and is necessary for the in vitro assembly process of the 50S ribosomal subunit. It is not involved in the protein synthesizing functions of that subunit. The chain is Large ribosomal subunit protein bL20 from Prochlorococcus marinus (strain NATL2A).